The chain runs to 223 residues: DNA mismatch repair protein MutH (223 aa).

The protein belongs to the MutH family.

The protein localises to the cytoplasm. Its function is as follows. Sequence-specific endonuclease that cleaves unmethylated GATC sequences. It is involved in DNA mismatch repair. This is DNA mismatch repair protein MutH from Shewanella sp. (strain MR-7).